We begin with the raw amino-acid sequence, 262 residues long: Tetrahydromethanopterin S-methyltransferase subunit C (262 aa).

A run of 7 helical transmembrane segments spans residues Leu27–Leu47, Pro72–Ile92, Leu98–Val118, Ala145–Ile165, Val173–Ile193, Lys200–Ala220, and Leu222–Val242.

The protein belongs to the MtrC family. In terms of assembly, the complex is composed of 8 subunits; MtrA, MtrB, MtrC, MtrD, MtrE, MtrF, MtrG and MtrH.

Its subcellular location is the cell membrane. It catalyses the reaction 5-methyl-5,6,7,8-tetrahydromethanopterin + coenzyme M + 2 Na(+)(in) = 5,6,7,8-tetrahydromethanopterin + methyl-coenzyme M + 2 Na(+)(out). Its pathway is one-carbon metabolism; methanogenesis from CO(2); methyl-coenzyme M from 5,10-methylene-5,6,7,8-tetrahydromethanopterin: step 2/2. In terms of biological role, part of a complex that catalyzes the formation of methyl-coenzyme M and tetrahydromethanopterin from coenzyme M and methyl-tetrahydromethanopterin. This is an energy-conserving, sodium-ion translocating step. The chain is Tetrahydromethanopterin S-methyltransferase subunit C from Methanococcus maripaludis (strain C5 / ATCC BAA-1333).